We begin with the raw amino-acid sequence, 199 residues long: Photosystem I reaction center subunit XI (199 aa).

Helical transmembrane passes span 108-128 and 165-185; these read LTAG…LFVL and FWLG…TLHL.

The protein belongs to the PsaL family.

Its subcellular location is the cellular thylakoid membrane. The chain is Photosystem I reaction center subunit XI from Prochlorococcus marinus (strain MIT 9301).